We begin with the raw amino-acid sequence, 529 residues long: Glucose transporter 2A (529 aa).

The disordered stretch occupies residues 1 to 22; sequence MTERRDNVSHAPDAIEGPNDGA. Topologically, residues 1-43 are cytoplasmic; the sequence is MTERRDNVSHAPDAIEGPNDGAHAEDTSPGFFSFENLGVAQVQ. A helical membrane pass occupies residues 44–64; that stretch reads VVGGTLNGFSIGFVAVYILLY. Residues 65 to 119 are Extracellular-facing; the sequence is EVATNCSLFKTTEACKAVGSYGCEWKDTEVCSWKKECDSDSDGVNPCESLIGYSS. A helical membrane pass occupies residues 120–140; the sequence is LYSGIFASAMIVGSMVGSIIA. At 141 to 152 the chain is on the cytoplasmic side; the sequence is GKCITMFGLKKS. The chain crosses the membrane as a helical span at residues 153 to 173; the sequence is FIIVGVMSVVASALNHISVAT. Residues 174 to 175 lie on the Extracellular side of the membrane; it reads NE. Residues 176-196 traverse the membrane as a helical segment; the sequence is FWVLCAGRVLMGIGLGVVCVI. Over 197–214 the chain is Cytoplasmic; the sequence is CPMYVNENAHPKLSKVDG. A helical membrane pass occupies residues 215 to 235; that stretch reads VLFQVFITFGIMLAAMLGLIL. Residues 236–250 lie on the Extracellular side of the membrane; that stretch reads DKTVNYDNDPDMAGR. Residues 251 to 271 form a helical membrane-spanning segment; that stretch reads FHGFCAVSSVLSVAMFLVGMF. At 272 to 300 the chain is on the cytoplasmic side; it reads LRESTATFSQDDDGKADGGMDPNEYGWGQ. The helical transmembrane segment at 301-321 threads the bilayer; the sequence is MLWPLFMGAVTAGTLQLTGIN. Topologically, residues 322–339 are extracellular; that stretch reads AVMNYAPKITENLGMDPS. The helical transmembrane segment at 340-360 threads the bilayer; that stretch reads LGNFLVMAWNFVTSLVAIPLA. Residues 361-368 are Cytoplasmic-facing; the sequence is SRFTMRQM. The helical transmembrane segment at 369–389 threads the bilayer; sequence FITCSFVASCMCLFLCGIPVF. At 390–404 the chain is on the extracellular side; the sequence is PGVAEEKVKNGVATT. Residues 405–425 traverse the membrane as a helical segment; it reads GIALFIAAFEFGVGSCFFVLA. Residues 426-439 lie on the Cytoplasmic side of the membrane; the sequence is QDLFPPSFRPKGSS. The chain crosses the membrane as a helical span at residues 440–460; that stretch reads FVVMMQFIFNILINLLYPITT. At 461-476 the chain is on the extracellular side; it reads EAISGGATGDQDKGQA. The chain crosses the membrane as a helical span at residues 477-497; the sequence is VVFILFGLIGLICFVLQFFYL. At 498-529 the chain is on the cytoplasmic side; sequence YPYDANQDHENDHGTEPVERILSPVDVPTPRN. Residues 508–529 are disordered; the sequence is NDHGTEPVERILSPVDVPTPRN.

It belongs to the major facilitator superfamily. Sugar transporter (TC 2.A.1.1) family.

Its subcellular location is the membrane. Functionally, facilitative glucose transporter. The chain is Glucose transporter 2A (THT2A) from Trypanosoma brucei brucei.